The chain runs to 666 residues: Protein scarlet (666 aa).

Residues 1 to 417 (MSDSDSKRID…TIQWLRFIQK (417 aa)) lie on the Cytoplasmic side of the membrane. A disordered region spans residues 26 to 55 (PVGSTIEVPSLDSTPKLSKRNSSERSLPLR). An ABC transporter domain is found at 69-316 (LVWRDLCVYT…FANHGYYCPE (248 aa)). ATP is bound at residue 108-115 (GSSGSGKT). Residues 418-438 (IAMAFIIGACFAGTTEPSQLG) traverse the membrane as a helical segment. Residues 439 to 444 (VQAVQG) lie on the Extracellular side of the membrane. Residues 445–465 (ALFIMISENTYHPMYSVLNLF) traverse the membrane as a helical segment. The Cytoplasmic portion of the chain corresponds to 466–490 (PQGFPLFMRETRSGLYSTGQYYAAN). The helical transmembrane segment at 491–511 (ILALLPGMIIEPLIFVIICYW) threads the bilayer. At 512–518 (LTGLRST) the chain is on the extracellular side. A helical transmembrane segment spans residues 519-539 (FYAFGVTAMCVVLVMNVATAC). The Cytoplasmic segment spans residues 540-551 (GCFFSTAFNSVP). The chain crosses the membrane as a helical span at residues 552-572 (LAMAYLVPLDYIFMITSGIFI). Topologically, residues 573 to 639 (QVNSLPVAFW…YSFNESNVYR (67 aa)) are extracellular. Residues Asn-607 and Asn-633 are each glycosylated (N-linked (GlcNAc...) asparagine). The helical transmembrane segment at 640–660 (NLLAMVGLYFGFHLLGYYCLW) threads the bilayer. Residues 661–666 (RRARKL) lie on the Cytoplasmic side of the membrane.

It belongs to the ABC transporter superfamily. ABCG family. Eye pigment precursor importer (TC 3.A.1.204) subfamily. As to quaternary structure, may form a heterodimer with w/white. Expressed in the eye, specifically in primary pigment cells, secondary pigment cells and retinula cells (at protein level).

It is found in the cytoplasmic vesicle membrane. The catalysed reaction is L-kynurenine(out) + ATP + H2O = L-kynurenine(in) + ADP + phosphate + H(+). Its function is as follows. ATP-dependent transporter of the ATP-binding cassette (ABC) family which transports various molecules including bioamines, neurotransmitters and metabolic intermediates. In the eye and probably in association with w/white, required for the transport of the eye brown pigment precursors, kynurenine and probably tryptophan, into pigment cell granules. In Malpighian tubules and pupal eyes, involved in kynurenine transport. Probably in association with w/white, plays a role in zinc storage granule biogenesis in Malpighian tubule principal epithelial cells. The protein is Protein scarlet of Drosophila melanogaster (Fruit fly).